The primary structure comprises 87 residues: MKLSIFFVLFFIAIAYCQPEFLDDEEDEVEETLPVAEEGRERSCITWRNSCMHNDKGCCFPWSCVCWSQTVSRNSSRKEKKCQCRLW.

The first 17 residues, 1–17 (MKLSIFFVLFFIAIAYC), serve as a signal peptide directing secretion. Positions 18 to 40 (QPEFLDDEEDEVEETLPVAEEGR) are excised as a propeptide. Disulfide bonds link C44–C59, C51–C64, C58–C84, and C66–C82.

The protein belongs to the neurotoxin omega-lctx family. In terms of tissue distribution, expressed by the venom gland.

It localises to the secreted. Functionally, modulates Cav2.1/CACNA1A voltage-gated calcium channels (P/Q-type currents) in rat cerebellar Purkinje cells and hippocampal CA1-CA3 neurons. At saturating concentrations (&gt;10 nM) decelerates activation kinetics and slightly increases peak amplitude without affecting deactivation kinetics. In vivo, does not cause death when intravenously injected into mice. In rat models, through its activity on Cav2.1/CACNA1A, has an ameliorative effect on memory defects provoked by hyperstimulation of N-methyl-D-aspartate receptors (NMDARs) in the hippocampus. The chain is Omega-lycotoxin-Am1b from Alopecosa marikovskyi (Wolf spider).